The sequence spans 304 residues: Ribosomal RNA small subunit methyltransferase H (304 aa).

S-adenosyl-L-methionine-binding positions include 36 to 38 (CGH), aspartate 55, phenylalanine 81, aspartate 102, and glutamine 109.

This sequence belongs to the methyltransferase superfamily. RsmH family.

It localises to the cytoplasm. The enzyme catalyses cytidine(1402) in 16S rRNA + S-adenosyl-L-methionine = N(4)-methylcytidine(1402) in 16S rRNA + S-adenosyl-L-homocysteine + H(+). Specifically methylates the N4 position of cytidine in position 1402 (C1402) of 16S rRNA. This chain is Ribosomal RNA small subunit methyltransferase H, found in Onion yellows phytoplasma (strain OY-M).